Consider the following 363-residue polypeptide: UDP-N-acetylglucosamine--N-acetylmuramyl-(pentapeptide) pyrophosphoryl-undecaprenol N-acetylglucosamine transferase (363 aa).

Residues Thr14–Gly16, Asn122, Arg163, Ser190, and Gln285 each bind UDP-N-acetyl-alpha-D-glucosamine.

It belongs to the glycosyltransferase 28 family. MurG subfamily.

Its subcellular location is the cell inner membrane. It carries out the reaction di-trans,octa-cis-undecaprenyl diphospho-N-acetyl-alpha-D-muramoyl-L-alanyl-D-glutamyl-meso-2,6-diaminopimeloyl-D-alanyl-D-alanine + UDP-N-acetyl-alpha-D-glucosamine = di-trans,octa-cis-undecaprenyl diphospho-[N-acetyl-alpha-D-glucosaminyl-(1-&gt;4)]-N-acetyl-alpha-D-muramoyl-L-alanyl-D-glutamyl-meso-2,6-diaminopimeloyl-D-alanyl-D-alanine + UDP + H(+). It functions in the pathway cell wall biogenesis; peptidoglycan biosynthesis. In terms of biological role, cell wall formation. Catalyzes the transfer of a GlcNAc subunit on undecaprenyl-pyrophosphoryl-MurNAc-pentapeptide (lipid intermediate I) to form undecaprenyl-pyrophosphoryl-MurNAc-(pentapeptide)GlcNAc (lipid intermediate II). This Prochlorococcus marinus (strain MIT 9312) protein is UDP-N-acetylglucosamine--N-acetylmuramyl-(pentapeptide) pyrophosphoryl-undecaprenol N-acetylglucosamine transferase.